Reading from the N-terminus, the 125-residue chain is Histone H2B type 1 (125 aa).

Residues 1 to 36 are disordered; it reads MPEPAKSRPAPKKGSKKAVTKAQKKDGKERKRSRKE. Proline 2 is modified (N-acetylproline). ADP-ribosyl glutamic acid is present on glutamate 3. At lysine 6 the chain carries N6-(2-hydroxyisobutyryl)lysine; alternate. Lysine 6 bears the N6-(beta-hydroxybutyryl)lysine; alternate mark. Lysine 6 is modified (N6-acetyllysine; alternate). At lysine 6 the chain carries N6-butyryllysine; alternate. Lysine 6 bears the N6-crotonyllysine; alternate mark. At lysine 6 the chain carries N6-lactoyllysine; alternate. Lysine 6 is covalently cross-linked (Glycyl lysine isopeptide (Lys-Gly) (interchain with G-Cter in SUMO2); alternate). Serine 7 bears the ADP-ribosylserine mark. Positions 9 to 19 are enriched in basic residues; that stretch reads PAPKKGSKKAV. At lysine 12 the chain carries N6-(beta-hydroxybutyryl)lysine; alternate. An N6-acetyllysine; alternate mark is found at lysine 12 and lysine 13. An N6-crotonyllysine; alternate mark is found at lysine 12 and lysine 13. An N6-lactoyllysine; alternate modification is found at lysine 12. Lysine 13 is subject to N6-(2-hydroxyisobutyryl)lysine; alternate. Serine 15 carries the phosphoserine; by STK4/MST1 modification. N6-acetyllysine; alternate occurs at positions 16, 17, 21, and 24. 4 positions are modified to N6-crotonyllysine; alternate: lysine 16, lysine 17, lysine 21, and lysine 24. 4 positions are modified to N6-lactoyllysine; alternate: lysine 16, lysine 17, lysine 21, and lysine 24. Lysine 17 is modified (N6-glutaryllysine; alternate). An N6-(2-hydroxyisobutyryl)lysine; alternate mark is found at lysine 21 and lysine 24. Lysine 21 is subject to N6-(beta-hydroxybutyryl)lysine; alternate. The residue at position 21 (lysine 21) is an N6-butyryllysine; alternate. Residue lysine 21 forms a Glycyl lysine isopeptide (Lys-Gly) (interchain with G-Cter in SUMO2); alternate linkage. The residue at position 25 (lysine 25) is an N6-(2-hydroxyisobutyryl)lysine. Lysine 35 carries the N6-(2-hydroxyisobutyryl)lysine; alternate modification. N6-(beta-hydroxybutyryl)lysine; alternate is present on lysine 35. Position 35 is an N6-crotonyllysine; alternate (lysine 35). Lysine 35 is subject to N6-glutaryllysine; alternate. Lysine 35 is subject to N6-succinyllysine; alternate. Residue lysine 35 forms a Glycyl lysine isopeptide (Lys-Gly) (interchain with G-Cter in ubiquitin); alternate linkage. Glutamate 36 carries the polyADP-ribosyl glutamic acid modification. At serine 37 the chain carries Phosphoserine; by AMPK. Residues lysine 44, lysine 47, and lysine 58 each carry the N6-(2-hydroxyisobutyryl)lysine; alternate modification. N6-lactoyllysine; alternate is present on lysine 44. N6-glutaryllysine; alternate occurs at positions 44 and 47. At lysine 47 the chain carries N6-methyllysine; alternate. Position 58 is an N6,N6-dimethyllysine; alternate (lysine 58). Arginine 79 carries the dimethylated arginine modification. Lysine 85 bears the N6-(2-hydroxyisobutyryl)lysine; alternate mark. Lysine 85 carries the post-translational modification N6-acetyllysine; alternate. Lysine 85 carries the N6-lactoyllysine; alternate modification. Residue lysine 85 is modified to N6,N6,N6-trimethyllysine; alternate. Residues arginine 86 and arginine 92 each carry the omega-N-methylarginine modification. Position 108 is an N6-(2-hydroxyisobutyryl)lysine; alternate (lysine 108). Lysine 108 carries the post-translational modification N6-lactoyllysine; alternate. Lysine 108 carries the post-translational modification N6-glutaryllysine; alternate. Lysine 108 is subject to N6-methyllysine; alternate. The O-linked (GlcNAc) serine glycan is linked to serine 112. Threonine 115 carries the post-translational modification Phosphothreonine. N6-(2-hydroxyisobutyryl)lysine; alternate occurs at positions 116 and 120. Lysine 116 is modified (N6-(beta-hydroxybutyryl)lysine; alternate). Lysine 116 and lysine 120 each carry N6-lactoyllysine; alternate. An N6-glutaryllysine; alternate mark is found at lysine 116 and lysine 120. 2 positions are modified to N6-succinyllysine; alternate: lysine 116 and lysine 120. Lysine 116 carries the post-translational modification N6-methylated lysine; alternate. Lysine 120 participates in a covalent cross-link: Glycyl lysine isopeptide (Lys-Gly) (interchain with G-Cter in ubiquitin); alternate.

It belongs to the histone H2B family. In terms of assembly, the nucleosome is a histone octamer containing two molecules each of H2A, H2B, H3 and H4 assembled in one H3-H4 heterotetramer and two H2A-H2B heterodimers. The octamer wraps approximately 147 bp of DNA. Post-translationally, monoubiquitination at Lys-35 (H2BK34Ub) by the MSL1/MSL2 dimer is required for histone H3 'Lys-4' (H3K4me) and 'Lys-79' (H3K79me) methylation and transcription activation at specific gene loci, such as HOXA9 and MEIS1 loci. Similarly, monoubiquitination at Lys-120 (H2BK120Ub) by the RNF20/40 complex gives a specific tag for epigenetic transcriptional activation and is also prerequisite for histone H3 'Lys-4' and 'Lys-79' methylation. It also functions cooperatively with the FACT dimer to stimulate elongation by RNA polymerase II. H2BK120Ub also acts as a regulator of mRNA splicing: deubiquitination by USP49 is required for efficient cotranscriptional splicing of a large set of exons. In terms of processing, phosphorylated on Ser-15 (H2BS14ph) by STK4/MST1 during apoptosis; which facilitates apoptotic chromatin condensation. Also phosphorylated on Ser-15 in response to DNA double strand breaks (DSBs), and in correlation with somatic hypermutation and immunoglobulin class-switch recombination. Phosphorylation at Ser-37 (H2BS36ph) by AMPK in response to stress promotes transcription. ADP-ribosylated by PARP1 or PARP2 on Ser-7 (H2BS6ADPr) in response to DNA damage. H2BS6ADPr promotes recruitment of CHD1L. Mono-ADP-ribosylated on Glu-3 (H2BE2ADPr) by PARP3 in response to single-strand breaks. Poly ADP-ribosylation on Glu-36 (H2BE35ADPr) by PARP1 regulates adipogenesis: it inhibits phosphorylation at Ser-37 (H2BS36ph), thereby blocking expression of pro-adipogenetic genes. Post-translationally, crotonylation (Kcr) is specifically present in male germ cells and marks testis-specific genes in post-meiotic cells, including X-linked genes that escape sex chromosome inactivation in haploid cells. Crotonylation marks active promoters and enhancers and confers resistance to transcriptional repressors. It is also associated with post-meiotically activated genes on autosomes. In terms of processing, glcNAcylation at Ser-112 promotes monoubiquitination of Lys-120. It fluctuates in response to extracellular glucose, and associates with transcribed genes. Lactylated in macrophages by EP300/P300 by using lactoyl-CoA directly derived from endogenous or exogenous lactate, leading to stimulates gene transcription.

It is found in the nucleus. Its subcellular location is the chromosome. Core component of nucleosome. Nucleosomes wrap and compact DNA into chromatin, limiting DNA accessibility to the cellular machineries which require DNA as a template. Histones thereby play a central role in transcription regulation, DNA repair, DNA replication and chromosomal stability. DNA accessibility is regulated via a complex set of post-translational modifications of histones, also called histone code, and nucleosome remodeling. In terms of biological role, has broad antibacterial activity. May contribute to the formation of the functional antimicrobial barrier of the colonic epithelium, and to the bactericidal activity of amniotic fluid. The chain is Histone H2B type 1 from Rattus norvegicus (Rat).